A 934-amino-acid polypeptide reads, in one-letter code: Protocadherin gamma-C3 (934 aa).

Residues 1 to 31 (MVPEAWRSGLVSTGRVVGVLLLLGALNKAST) form the signal peptide. 6 consecutive Cadherin domains span residues 32-135 (VIHY…NPAF), 136-244 (PTQE…APVF), 245-352 (NQSL…APEI), 353-457 (TVTS…PPQS), 458-567 (SQSS…APQV), and 572-685 (PGGS…APRE). The Extracellular portion of the chain corresponds to 32–693 (VIHYEIPEER…REQKKNLTFY (662 aa)). 6 N-linked (GlcNAc...) asparagine glycosylation sites follow: Asn245, Asn424, Asn478, Asn550, Asn615, and Asn689. Residues 694–714 (LLLSLILVSVGFVVTVFGVII) traverse the membrane as a helical segment. Topologically, residues 715-934 (FKVYKWKQSR…KKKSGKKEKK (220 aa)) are cytoplasmic. Disordered stretches follow at residues 804 to 843 (ESAPPGQQAPPNTDWRFSQAQRPGTSGSQNGDDTGTWPNN) and 904 to 934 (ATLTNAAGKRDGKAPAGGNGNKKKSGKKEKK). The segment covering 812–843 (APPNTDWRFSQAQRPGTSGSQNGDDTGTWPNN) has biased composition (polar residues). A compositionally biased stretch (basic residues) spans 924-934 (NKKKSGKKEKK).

The protein resides in the cell membrane. In terms of biological role, potential calcium-dependent cell-adhesion protein. May be involved in the establishment and maintenance of specific neuronal connections in the brain. This Homo sapiens (Human) protein is Protocadherin gamma-C3 (PCDHGC3).